Reading from the N-terminus, the 404-residue chain is Propionate kinase (404 aa).

The protein belongs to the acetokinase family. PduW subfamily.

It localises to the cytoplasm. It catalyses the reaction propanoate + ATP = propanoyl phosphate + ADP. The protein operates within polyol metabolism; 1,2-propanediol degradation. Functionally, works with phosphate acetyltransferase (pta) to capture exogenous propionate and regenerate propionyl-CoA during degradation of 1,2-propanediol (1,2-PD). Its function is as follows. Expression of a cosmid containing the full 21-gene pdu operon in E.coli allows E.coli to grow on 1,2-propanediol (1,2-PD) with the appearance of bacterial microcompartments (BMC) in its cytoplasm. The chain is Propionate kinase from Citrobacter freundii.